We begin with the raw amino-acid sequence, 269 residues long: [LysW]-aminoadipate kinase (269 aa).

Position 5 to 8 (5 to 8 (KVGG)) interacts with ATP. A substrate-binding site is contributed by Arg64. Tyr78 contacts ATP. Asn168 is a binding site for substrate.

It belongs to the acetylglutamate kinase family. LysZ subfamily.

The protein resides in the cytoplasm. It catalyses the reaction [amino-group carrier protein]-C-terminal-N-(1,4-dicarboxybutan-1-yl)-L-glutamine + ATP = [amino-group carrier protein]-C-terminal-N-(1-carboxy-5-phosphooxy-5-oxopentan-1-yl)-L-glutamine + ADP. The protein operates within amino-acid biosynthesis; L-lysine biosynthesis via AAA pathway; L-lysine from L-alpha-aminoadipate (Thermus route): step 2/5. In terms of biological role, catalyzes the phosphorylation of LysW-gamma-alpha-aminoadipate. Does not phosphorylate N-acetyl-glutamate. The protein is [LysW]-aminoadipate kinase of Thermus thermophilus (strain ATCC BAA-163 / DSM 7039 / HB27).